A 430-amino-acid chain; its full sequence is Adenosylhomocysteinase (430 aa).

Substrate-binding residues include threonine 56, aspartate 131, and glutamate 156. 157 to 159 (TTT) lines the NAD(+) pocket. 2 residues coordinate substrate: lysine 186 and aspartate 190. Residues asparagine 191, 220–225 (GFGDVG), glutamate 243, asparagine 278, 299–301 (IGH), and asparagine 344 each bind NAD(+).

This sequence belongs to the adenosylhomocysteinase family. The cofactor is NAD(+).

The protein resides in the cytoplasm. It catalyses the reaction S-adenosyl-L-homocysteine + H2O = L-homocysteine + adenosine. It functions in the pathway amino-acid biosynthesis; L-homocysteine biosynthesis; L-homocysteine from S-adenosyl-L-homocysteine: step 1/1. In terms of biological role, may play a key role in the regulation of the intracellular concentration of adenosylhomocysteine. The chain is Adenosylhomocysteinase from Halorhodospira halophila (strain DSM 244 / SL1) (Ectothiorhodospira halophila (strain DSM 244 / SL1)).